A 198-amino-acid polypeptide reads, in one-letter code: Putative nitroreductase MJ1384 (198 aa).

This sequence belongs to the nitroreductase family. It depends on FMN as a cofactor.

This Methanocaldococcus jannaschii (strain ATCC 43067 / DSM 2661 / JAL-1 / JCM 10045 / NBRC 100440) (Methanococcus jannaschii) protein is Putative nitroreductase MJ1384.